We begin with the raw amino-acid sequence, 585 residues long: uncharacterized protein (585 aa).

The disordered stretch occupies residues 27–59; that stretch reads DDSERSVKSVSVSISDDEDSKTDVQDNMATPST.

This is an uncharacterized protein from Saccharomyces cerevisiae (strain ATCC 204508 / S288c) (Baker's yeast).